Here is a 556-residue protein sequence, read N- to C-terminus: Potassium-transporting ATPase potassium-binding subunit (556 aa).

A run of 10 helical transmembrane segments spans residues 1-21, 60-80, 130-150, 173-193, 245-265, 281-301, 374-394, 416-436, 482-502, and 529-549; these read MTWI…GIAQ, SYAR…YALQ, GLCV…VALI, LRIL…GGAV, PQPW…FSLP, ILAA…AAEF, GLYG…LLVG, ILVM…VPGL, AALG…ILAL, and LIVF…LTLG.

The protein belongs to the KdpA family. In terms of assembly, the system is composed of three essential subunits: KdpA, KdpB and KdpC.

Its subcellular location is the cell membrane. Functionally, part of the high-affinity ATP-driven potassium transport (or Kdp) system, which catalyzes the hydrolysis of ATP coupled with the electrogenic transport of potassium into the cytoplasm. This subunit binds the extracellular potassium ions and delivers the ions to the membrane domain of KdpB through an intramembrane tunnel. In Cutibacterium acnes (strain DSM 16379 / KPA171202) (Propionibacterium acnes), this protein is Potassium-transporting ATPase potassium-binding subunit.